Consider the following 232-residue polypeptide: Clarin-2 (232 aa).

Residues 10-30 (YGLASLLSFSSFILIIVALVV) form a helical membrane-spanning segment. N-linked (GlcNAc...) asparagine glycosylation is present at Asn-48. 3 helical membrane passes run 101–121 (ILLL…FAIL), 139–159 (LWNV…VAAV), and 188–208 (SFWI…VVAI).

The protein belongs to the clarin family.

The protein localises to the cell projection. It localises to the stereocilium membrane. In terms of biological role, plays a key role to hearing function. Required for normal organization and maintenance of the stereocilia bundle and for mechano-electrical transduction. In Homo sapiens (Human), this protein is Clarin-2.